Here is a 356-residue protein sequence, read N- to C-terminus: S-adenosylmethionine:tRNA ribosyltransferase-isomerase (356 aa).

It belongs to the QueA family. In terms of assembly, monomer.

The protein resides in the cytoplasm. The catalysed reaction is 7-aminomethyl-7-carbaguanosine(34) in tRNA + S-adenosyl-L-methionine = epoxyqueuosine(34) in tRNA + adenine + L-methionine + 2 H(+). The protein operates within tRNA modification; tRNA-queuosine biosynthesis. Transfers and isomerizes the ribose moiety from AdoMet to the 7-aminomethyl group of 7-deazaguanine (preQ1-tRNA) to give epoxyqueuosine (oQ-tRNA). This is S-adenosylmethionine:tRNA ribosyltransferase-isomerase from Citrobacter koseri (strain ATCC BAA-895 / CDC 4225-83 / SGSC4696).